We begin with the raw amino-acid sequence, 171 residues long: ATP synthase subunit b (171 aa).

The helical transmembrane segment at 2-22 (FVVKMVLGFLILLSPLCATGL) threads the bilayer.

The protein belongs to the ATPase B chain family. F-type ATPases have 2 components, F(1) - the catalytic core - and F(0) - the membrane proton channel. F(1) has five subunits: alpha(3), beta(3), gamma(1), delta(1), epsilon(1). F(0) has three main subunits: a(1), b(2) and c(10-14). The alpha and beta chains form an alternating ring which encloses part of the gamma chain. F(1) is attached to F(0) by a central stalk formed by the gamma and epsilon chains, while a peripheral stalk is formed by the delta and b chains.

The protein resides in the cell inner membrane. F(1)F(0) ATP synthase produces ATP from ADP in the presence of a proton or sodium gradient. F-type ATPases consist of two structural domains, F(1) containing the extramembraneous catalytic core and F(0) containing the membrane proton channel, linked together by a central stalk and a peripheral stalk. During catalysis, ATP synthesis in the catalytic domain of F(1) is coupled via a rotary mechanism of the central stalk subunits to proton translocation. Functionally, component of the F(0) channel, it forms part of the peripheral stalk, linking F(1) to F(0). This Helicobacter pylori (strain ATCC 700392 / 26695) (Campylobacter pylori) protein is ATP synthase subunit b.